The sequence spans 424 residues: MSRKLFRNGRIFTPTDRGVPLAGKHQGDVIHIPRGAIYAKDGVIEAVGDEREVLAGISAGQVDEEIDCRGYCVIPGFVDPHTHMCFAKTREEEFLLRIEGMEYLEILGRGGGILSSVRAARAATEDELFAFTRKHVMTALGLGTTTLEIKSGYGLDTESELRMLRVIERIGRETPLDVVPTFLGAHAIPEEHVAHPDGYVDLVVHEMLPAVARHSGAVFCDVFCEAGVFSVAQSRRVLEAARGVGLELKIHTDEVHDLGGSALAAELRATSAEHLLRTSETNLRAMAEAGVVGILLPATAYSLRRRYAPARRMVELGLPVAVATDCNPGTAYTESMPFVYGLAVLGMGLSMQEALVAATLNGAYAIGQGGRVGSLEVGKSADFLLLDGKSPAILAYHIGVSPVVEVYKQANPMRQWEGITGDHP.

The Fe(3+) site is built by H81 and H83. Positions 81 and 83 each coordinate Zn(2+). Residues R90, Y153, and H186 each contribute to the 4-imidazolone-5-propanoate site. An N-formimidoyl-L-glutamate-binding site is contributed by Y153. Position 251 (H251) interacts with Fe(3+). H251 contacts Zn(2+). E254 is a 4-imidazolone-5-propanoate binding site. D325 provides a ligand contact to Fe(3+). D325 is a Zn(2+) binding site. N-formimidoyl-L-glutamate contacts are provided by N327 and G329. T330 is a 4-imidazolone-5-propanoate binding site.

Belongs to the metallo-dependent hydrolases superfamily. HutI family. Zn(2+) serves as cofactor. Requires Fe(3+) as cofactor.

It is found in the cytoplasm. It catalyses the reaction 4-imidazolone-5-propanoate + H2O = N-formimidoyl-L-glutamate. It functions in the pathway amino-acid degradation; L-histidine degradation into L-glutamate; N-formimidoyl-L-glutamate from L-histidine: step 3/3. Catalyzes the hydrolytic cleavage of the carbon-nitrogen bond in imidazolone-5-propanoate to yield N-formimidoyl-L-glutamate. It is the third step in the universal histidine degradation pathway. The polypeptide is Imidazolonepropionase (Syntrophobacter fumaroxidans (strain DSM 10017 / MPOB)).